The following is a 238-amino-acid chain: Putative pectate lyase X (238 aa).

The first 22 residues, 1–22 (MKYLLPTAAAGLLLLAAQPAMA), serve as a signal peptide directing secretion. D153, E188, and D192 together coordinate Ca(2+).

The protein belongs to the polysaccharide lyase 1 family. Requires Ca(2+) as cofactor.

The enzyme catalyses Eliminative cleavage of (1-&gt;4)-alpha-D-galacturonan to give oligosaccharides with 4-deoxy-alpha-D-galact-4-enuronosyl groups at their non-reducing ends.. It participates in glycan metabolism; pectin degradation; 2-dehydro-3-deoxy-D-gluconate from pectin: step 2/5. Its function is as follows. Involved in maceration and soft-rotting of plant tissue. This Pectobacterium carotovorum (Erwinia carotovora) protein is Putative pectate lyase X (PEL X).